The primary structure comprises 495 residues: Cobyric acid synthase (495 aa).

In terms of domain architecture, GATase cobBQ-type spans 253–446 (KISIAIVYFP…FHGIFDGSAF (194 aa)). Catalysis depends on Cys-334, which acts as the Nucleophile. Residue His-438 is part of the active site.

This sequence belongs to the CobB/CobQ family. CobQ subfamily.

It functions in the pathway cofactor biosynthesis; adenosylcobalamin biosynthesis. Its function is as follows. Catalyzes amidations at positions B, D, E, and G on adenosylcobyrinic A,C-diamide. NH(2) groups are provided by glutamine, and one molecule of ATP is hydrogenolyzed for each amidation. This chain is Cobyric acid synthase, found in Chlorobium phaeobacteroides (strain BS1).